Reading from the N-terminus, the 286-residue chain is L-cysteine S-thiosulfotransferase subunit SoxA (286 aa).

The signal sequence occupies residues 1 to 26 (MTVSKRFLAPVFAMVGGLVLAFSANA). Positions 80-166 (LAVERGADIW…ALTSYIKHQS (87 aa)) constitute a Cytochrome c domain. Cysteine 100, cysteine 103, histidine 104, cysteine 138, cysteine 202, cysteine 205, and histidine 206 together coordinate heme. Arginine 243 contributes to the substrate binding site. Cysteine 247 is a heme binding site. Cysteine 247 serves as the catalytic Cysteine persulfide intermediate.

The protein belongs to the SoxA family. As to quaternary structure, heterodimer of SoxA and SoxX. The cofactor is heme. Cysteine persulfide at Cys-247.

Its subcellular location is the periplasm. The catalysed reaction is L-cysteinyl-[SoxY protein] + thiosulfate + 2 Fe(III)-[cytochrome c] = S-sulfosulfanyl-L-cysteinyl-[SoxY protein] + 2 Fe(II)-[cytochrome c] + 2 H(+). It carries out the reaction S-sulfanyl-L-cysteinyl-[SoxY protein] + thiosulfate + 2 Fe(III)-[cytochrome c] = S-(2-sulfodisulfanyl)-L-cysteinyl-[SoxY protein] + 2 Fe(II)-[cytochrome c] + 2 H(+). Its function is as follows. C-type diheme cytochrome, which is part of the SoxAX cytochrome complex involved in sulfur oxidation. The SoxAX complex catalyzes the formation of a heterodisulfide bond between the conserved cysteine residue on a sulfur carrier SoxYZ complex subunit SoxY and thiosulfate or other inorganic sulfur substrates. This leads to the liberation of two electrons, which may be transferred from the SoxAX complex to another cytochrome c that then channels them into the respiratory electron transport chain. Some electrons may be used for reductive CO(2) fixation. This chain is L-cysteine S-thiosulfotransferase subunit SoxA, found in Pseudaminobacter salicylatoxidans.